Reading from the N-terminus, the 136-residue chain is Protein PsiE (136 aa).

4 helical membrane-spanning segments follow: residues 15–35, 55–75, 82–102, and 108–128; these read ILQN…VLFL, YELV…ALIV, FHFP…RLII, and PMDV…LWLC.

It belongs to the PsiE family.

It is found in the cell inner membrane. In Salmonella arizonae (strain ATCC BAA-731 / CDC346-86 / RSK2980), this protein is Protein PsiE.